Reading from the N-terminus, the 759-residue chain is Cullin-4A (759 aa).

A Glycyl lysine isopeptide (Lys-Gly) (interchain with G-Cter in SUMO2) cross-link involves residue Lys-8. Ser-10 carries the phosphoserine modification. Residue Lys-33 forms a Glycyl lysine isopeptide (Lys-Gly) (interchain with G-Cter in ubiquitin) linkage. Positions 691 to 751 constitute a Cullin neddylation domain; that stretch reads DRQYQIDAAI…RDYMERDKDN (61 aa). Lys-705 participates in a covalent cross-link: Glycyl lysine isopeptide (Lys-Gly) (interchain with G-Cter in NEDD8).

This sequence belongs to the cullin family. As to quaternary structure, can self-associate. Component of multiple DCX (DDB1-CUL4-X-box) E3 ubiquitin-protein ligase complexes that seem to consist of DDB1, CUL4A or CUL4B, RBX1 and a variable substrate recognition component which seems to belong to a protein family described as DCAF (Ddb1- and Cul4-associated factor) or CDW (CUL4-DDB1-associated WD40-repeat) proteins. Component of the CSA complex (DCX(ERCC8) complex) containing ERCC8, RBX1, DDB1 and CUL4A; the CSA complex interacts with RNA polymerase II; upon UV irradiation it interacts with the COP9 signalosome and preferentially with the hyperphosphorylated form of RNA polymerase II. Component of the DCX(DET1-COP1) complex with the substrate recognition component DET1 and COP1. Component of the DCX(DDB2) complex with the substrate recognition component DDB2. Component of the DCX(DTL) complex with the putative substrate recognition component DTL. Component of DCX complexes part of the DesCEND (destruction via C-end degrons) pathway, which contain either TRPC4AP or DCAF12 as substrate-recognition component. Component of the DCX(AMBRA1) complex with the substrate recognition component AMBRA1. Interacts with DDB1, RBX1, RNF7, CDT1, TIP120A/CAND1, SKP2, CDKN1B, MDM2, TP53 and HOXA9. Interacts with DDB2; the interactions with DDB2 and CAND1 are mutually exclusive. Interacts with DCAF1, DTL, DDA1, DCAF6, DCAF4, DCAF16, DCAF17, DET1, WDTC1, DCAF5, DCAF11, WDR24A, COP1, PAFAH1B1, ERCC8, GRWD1, FBXW5, RBBP7, GNB2, WSB1, WSB2, NUP43, PWP1, FBXW8, ATG16L1, KATNB1, RBBP4, RBBP5, LRWD1 and DCAF8. May interact with WDR26, WDR51B, SNRNP40, WDR61, WDR76, WDR5. Interacts (when neddylated) with ARIH1; leading to activate the E3 ligase activity of ARIH1. The DDB1-CUL4A complex interacts with CRY1. Interacts (unneddylated form) with DCUN1D1, DCUN1D2, DCUN1D3, DCUN1D4 and DCUN1D5; these interactions promote the cullin neddylation. (Microbial infection) Interacts with Epstein-Barr virus BPLF1. Post-translationally, neddylated; required for activity of cullin-RING-based E3 ubiquitin-protein ligase complexes. Deneddylated via its interaction with the COP9 signalosome (CSN) complex. (Microbial infection) Deneddylated by Epstein-Barr virus BPLF1 leading to a S-phase-like environment that is required for efficient replication of the viral genome.

It functions in the pathway protein modification; protein ubiquitination. In terms of biological role, core component of multiple cullin-RING-based E3 ubiquitin-protein ligase complexes which mediate the ubiquitination of target proteins. As a scaffold protein may contribute to catalysis through positioning of the substrate and the ubiquitin-conjugating enzyme. The E3 ubiquitin-protein ligase activity of the complex is dependent on the neddylation of the cullin subunit and is inhibited by the association of the deneddylated cullin subunit with TIP120A/CAND1. The functional specificity of the E3 ubiquitin-protein ligase complex depends on the variable substrate recognition component. DCX(DET1-COP1) directs ubiquitination of JUN. DCX(DDB2) directs ubiquitination of XPC. DCX(DDB2) ubiquitinates histones H3-H4 and is required for efficient histone deposition during replication-coupled (H3.1) and replication-independent (H3.3) nucleosome assembly, probably by facilitating the transfer of H3 from ASF1A/ASF1B to other chaperones involved in histone deposition. DCX(DTL) plays a role in PCNA-dependent polyubiquitination of CDT1 and MDM2-dependent ubiquitination of p53/TP53 in response to radiation-induced DNA damage and during DNA replication. DCX(DTL) directs autoubiquitination of DTL. In association with DDB1 and SKP2 probably is involved in ubiquitination of CDKN1B/p27kip. Is involved in ubiquitination of HOXA9. The DDB1-CUL4A-DTL E3 ligase complex regulates the circadian clock function by mediating the ubiquitination and degradation of CRY1. The DCX(ERCC8) complex (also named CSA complex) plays a role in transcription-coupled repair (TCR). A number of DCX complexes (containing either TRPC4AP or DCAF12 as substrate-recognition component) are part of the DesCEND (destruction via C-end degrons) pathway, which recognizes a C-degron located at the extreme C terminus of target proteins, leading to their ubiquitination and degradation. The DCX(AMBRA1) complex is a master regulator of the transition from G1 to S cell phase by mediating ubiquitination of phosphorylated cyclin-D (CCND1, CCND2 and CCND3). The DCX(AMBRA1) complex also acts as a regulator of Cul5-RING (CRL5) E3 ubiquitin-protein ligase complexes by mediating ubiquitination and degradation of Elongin-C (ELOC) component of CRL5 complexes. With CUL4B, contributes to ribosome biogenesis. This Homo sapiens (Human) protein is Cullin-4A.